We begin with the raw amino-acid sequence, 171 residues long: Protein FAM209A (171 aa).

The signal sequence occupies residues 1-19; it reads MWTLKSSLVLLLCLTCSYA. At 20-52 the chain is on the extracellular side; sequence FMFSSLRQKTSEPQGKVQYGEHFRIRQNLPEHT. The helical transmembrane segment at 53 to 73 threads the bilayer; that stretch reads QGWLGSKWLWLLFVVVPFVIL. The Cytoplasmic portion of the chain corresponds to 74 to 171; it reads QCQRDSEKNK…CEIWGEESSS (98 aa). The segment at 81-107 is disordered; it reads KNKEQSPPGLRGGQLHSPLKKKRNASP. Residues 114 to 139 adopt a coiled-coil conformation; the sequence is NTLMELEVELMKFVSKVRNLKRAMAT.

Belongs to the FAM209 family. Interacts with DPY19L2. Interacts with CYLC1; the interaction may be relevant for proper acrosome attachment to the nuclear envelope.

The protein resides in the nucleus inner membrane. Its function is as follows. May play a role in sperm acrosome biogenesis. In Homo sapiens (Human), this protein is Protein FAM209A.